Consider the following 119-residue polypeptide: uncharacterized protein (119 aa).

Positions serine 64 to asparagine 119 are disordered. Positions proline 95–valine 104 are enriched in polar residues.

This is an uncharacterized protein from Nostoc sp. (strain PCC 7120 / SAG 25.82 / UTEX 2576).